The primary structure comprises 121 residues: Small ribosomal subunit protein uS13 (121 aa).

The segment at 92-121 (RRGLPVRGQKTKNNSRTRKGPRKTMANKKK) is disordered.

The protein belongs to the universal ribosomal protein uS13 family. Part of the 30S ribosomal subunit. Forms a loose heterodimer with protein S19. Forms two bridges to the 50S subunit in the 70S ribosome.

Its function is as follows. Located at the top of the head of the 30S subunit, it contacts several helices of the 16S rRNA. In the 70S ribosome it contacts the 23S rRNA (bridge B1a) and protein L5 of the 50S subunit (bridge B1b), connecting the 2 subunits; these bridges are implicated in subunit movement. Contacts the tRNAs in the A and P-sites. The sequence is that of Small ribosomal subunit protein uS13 from Oceanobacillus iheyensis (strain DSM 14371 / CIP 107618 / JCM 11309 / KCTC 3954 / HTE831).